Reading from the N-terminus, the 491-residue chain is Glutamyl-tRNA(Gln) amidotransferase subunit A (491 aa).

Catalysis depends on charge relay system residues lysine 80 and serine 155. Catalysis depends on serine 179, which acts as the Acyl-ester intermediate.

This sequence belongs to the amidase family. GatA subfamily. Heterotrimer of A, B and C subunits.

The enzyme catalyses L-glutamyl-tRNA(Gln) + L-glutamine + ATP + H2O = L-glutaminyl-tRNA(Gln) + L-glutamate + ADP + phosphate + H(+). In terms of biological role, allows the formation of correctly charged Gln-tRNA(Gln) through the transamidation of misacylated Glu-tRNA(Gln) in organisms which lack glutaminyl-tRNA synthetase. The reaction takes place in the presence of glutamine and ATP through an activated gamma-phospho-Glu-tRNA(Gln). This Salinispora tropica (strain ATCC BAA-916 / DSM 44818 / JCM 13857 / NBRC 105044 / CNB-440) protein is Glutamyl-tRNA(Gln) amidotransferase subunit A.